Reading from the N-terminus, the 940-residue chain is Isoleucine--tRNA ligase (940 aa).

The 'HIGH' region signature appears at 58-68; that stretch reads PYANGDIHIGH. Glu-564 serves as a coordination point for L-isoleucyl-5'-AMP. A 'KMSKS' region motif is present at residues 605-609; that stretch reads KMSKS. Lys-608 is an ATP binding site. Zn(2+) is bound by residues Cys-903, Cys-906, Cys-923, and Cys-926.

This sequence belongs to the class-I aminoacyl-tRNA synthetase family. IleS type 1 subfamily. Monomer. It depends on Zn(2+) as a cofactor.

Its subcellular location is the cytoplasm. It catalyses the reaction tRNA(Ile) + L-isoleucine + ATP = L-isoleucyl-tRNA(Ile) + AMP + diphosphate. In terms of biological role, catalyzes the attachment of isoleucine to tRNA(Ile). As IleRS can inadvertently accommodate and process structurally similar amino acids such as valine, to avoid such errors it has two additional distinct tRNA(Ile)-dependent editing activities. One activity is designated as 'pretransfer' editing and involves the hydrolysis of activated Val-AMP. The other activity is designated 'posttransfer' editing and involves deacylation of mischarged Val-tRNA(Ile). The protein is Isoleucine--tRNA ligase of Shewanella halifaxensis (strain HAW-EB4).